The chain runs to 141 residues: Hemoglobin subunit alpha (141 aa).

A Globin domain is found at 1–141; that stretch reads VLSPADKSNV…VSTVLTSKYR (141 aa). The residue at position 3 (Ser-3) is a Phosphoserine. 2 positions are modified to N6-succinyllysine: Lys-7 and Lys-11. Position 16 is an N6-acetyllysine; alternate (Lys-16). Position 16 is an N6-succinyllysine; alternate (Lys-16). Tyr-24 carries the post-translational modification Phosphotyrosine. At Ser-35 the chain carries Phosphoserine. An N6-succinyllysine modification is found at Lys-40. Ser-49 is modified (phosphoserine). Residue His-58 coordinates O2. Position 87 (His-87) interacts with heme b. Ser-102 is modified (phosphoserine). The residue at position 108 (Thr-108) is a Phosphothreonine. Phosphoserine is present on residues Ser-124 and Ser-131. A phosphothreonine mark is found at Thr-134 and Thr-137. At Ser-138 the chain carries Phosphoserine.

The protein belongs to the globin family. As to quaternary structure, heterotetramer of two alpha chains and two beta chains. As to expression, red blood cells.

Involved in oxygen transport from the lung to the various peripheral tissues. In terms of biological role, hemopressin acts as an antagonist peptide of the cannabinoid receptor CNR1. Hemopressin-binding efficiently blocks cannabinoid receptor CNR1 and subsequent signaling. The protein is Hemoglobin subunit alpha (HBA) of Saguinus oedipus (Cotton-top tamarin).